The sequence spans 591 residues: NADP-dependent malic enzyme (591 aa).

Positions M1–D10 are enriched in basic and acidic residues. The interval M1–G26 is disordered. Y139 functions as the Proton donor in the catalytic mechanism. R192 contributes to the NAD(+) binding site. Catalysis depends on K210, which acts as the Proton acceptor. A divalent metal cation contacts are provided by E282, D283, and D306. D306 is a binding site for NAD(+). L335 to A351 serves as a coordination point for NADP(+). Position 447 (N447) interacts with NAD(+).

It belongs to the malic enzymes family. As to quaternary structure, homotetramer. Requires Mg(2+) as cofactor. Mn(2+) serves as cofactor. MRNA found twofold higher in leaves and stems than in roots.

The protein resides in the cytoplasm. The enzyme catalyses (S)-malate + NADP(+) = pyruvate + CO2 + NADPH. It carries out the reaction oxaloacetate + H(+) = pyruvate + CO2. The sequence is that of NADP-dependent malic enzyme from Populus trichocarpa (Western balsam poplar).